We begin with the raw amino-acid sequence, 213 residues long: Adenylate kinase (213 aa).

An ATP-binding site is contributed by 10 to 15 (GSGKGS). The tract at residues 30–60 (STGNLFRAILKEDSELARKIKEINVSGGKLV) is NMP. AMP contacts are provided by residues threonine 31, arginine 36, 58–60 (KLV), 87–90 (GYPR), and glutamine 94. An LID region spans residues 123 to 160 (GRWMCPKCAGIYNIHFKKPQVHGLCDNDQATLYQRADD). Arginine 124 provides a ligand contact to ATP. Positions 127 and 130 each coordinate Zn(2+). 133-134 (IY) lines the ATP pocket. 2 residues coordinate Zn(2+): cysteine 147 and aspartate 150. Residues arginine 157 and arginine 168 each coordinate AMP. Glutamine 196 contacts ATP.

It belongs to the adenylate kinase family. In terms of assembly, monomer.

It localises to the cytoplasm. It carries out the reaction AMP + ATP = 2 ADP. It participates in purine metabolism; AMP biosynthesis via salvage pathway; AMP from ADP: step 1/1. In terms of biological role, catalyzes the reversible transfer of the terminal phosphate group between ATP and AMP. Plays an important role in cellular energy homeostasis and in adenine nucleotide metabolism. The protein is Adenylate kinase of Ureaplasma parvum serovar 3 (strain ATCC 27815 / 27 / NCTC 11736).